An 899-amino-acid polypeptide reads, in one-letter code: Ewing's tumor-associated antigen 1 homolog (899 aa).

The interval 1–82 (MSRRRKHGDS…TEERYETPKR (82 aa)) is disordered. Positions 71–81 (SNTEERYETPK) are enriched in basic and acidic residues. Residues 105–111 (IFWDQNS) carry the ATR-activation domain (AAD) motif. Residues 180–210 (TKLKSQNQEEELMKLAKQFDKNMEELDVIQE) are a coiled coil. Glycyl lysine isopeptide (Lys-Gly) (interchain with G-Cter in SUMO2) cross-links involve residues K416 and K444. S467 bears the Phosphoserine mark. Glycyl lysine isopeptide (Lys-Gly) (interchain with G-Cter in SUMO2) cross-links involve residues K485 and K539. The RBM1 motif signature appears at 607–622 (DDVDDDILYQACDDIE). A Phosphoserine modification is found at S810. Residues 833 to 899 (NKTVNPLPGK…AQASSVKKGR (67 aa)) are disordered. Residues 859–877 (PSKEEEEKNRKCSPEEIQR) are compositionally biased toward basic and acidic residues. The RBM2 motif signature appears at 868–890 (RKCSPEEIQRKRQAALIRRMAKA).

In terms of assembly, interacts (via RBM1 motif) with RPA1. Interacts (via RBM2 motif) with RPA2. Interacts (via the ATR-activation domain motif) with ATR. Post-translationally, phosphorylated by ATR.

It is found in the nucleus. Functionally, replication stress response protein that accumulates at DNA damage sites and promotes replication fork progression and integrity. Recruited to stalled replication forks via interaction with the RPA complex and directly stimulates ATR kinase activity independently of TOPBP1. Probably only regulates a subset of ATR targets. The chain is Ewing's tumor-associated antigen 1 homolog from Bos taurus (Bovine).